A 155-amino-acid chain; its full sequence is Ribosomal RNA large subunit methyltransferase H (155 aa).

S-adenosyl-L-methionine is bound by residues Leu72, Gly103, and Leu122–Leu127.

This sequence belongs to the RNA methyltransferase RlmH family. As to quaternary structure, homodimer.

The protein resides in the cytoplasm. The catalysed reaction is pseudouridine(1915) in 23S rRNA + S-adenosyl-L-methionine = N(3)-methylpseudouridine(1915) in 23S rRNA + S-adenosyl-L-homocysteine + H(+). Specifically methylates the pseudouridine at position 1915 (m3Psi1915) in 23S rRNA. The protein is Ribosomal RNA large subunit methyltransferase H of Shigella boydii serotype 18 (strain CDC 3083-94 / BS512).